Reading from the N-terminus, the 800-residue chain is MWLLLALLSIFQETPAFSLEASEEMEQEPCPAPISEQQEQVLTVALGQPVRLCCGRTERGRHWYKEGSRLASAGRVRGWRGRLEIASFLPEDAGRYLCLARGSMTVVHNLTLIMDDSLPSINNEDPKTLSSSSSGHSYLQQAPYWTHPQRMEKKLHAVPAGNTVKFRCPAAGNPMPTIHWLKNGQAFHGENRIGGIRLRHQHWSLVMESVVPSDRGTYTCLVENSLGSIRYSYLLDVLERSPHRPILQAGLPANTTAVVGSNVELLCKVYSDAQPHIQWLKHIVINGSSFGADGFPYVQVLKTTDINSSEVEVLYLRNVSAEDAGEYTCLAGNSIGLSYQSAWLTVLPAEEEDLAWTTATSEARYTDIILYVSGSLALVLLLLLAGVYHRQAIHGHHSRQPVTVQKLSRFPLARQFSLESRSSGKSSLSLVRGVRLSSSGPPLLTGLVSLDLPLDPLWEFPRDRLVLGKPLGEGCFGQVVRAEALGMDSSRPDQTSTVAVKMLKDNASDKDLADLISEMEMMKLIGRHKNIINLLGVCTQEGPLYVIVEYAAKGNLREFLRARRPPGPDLSPDGPRSSEGPLSFPALVSCAYQVARGMQYLESRKCIHRDLAARNVLVTEDDVMKIADFGLARGVHHIDYYKKTSNGRLPVKWMAPEALFDRVYTHQSDVWSFGILLWEIFTLGGSPYPGIPVEELFSLLREGHRMERPPNCPSELYGLMRECWHAAPSQRPTFKQLVEALDKVLLAVSEEYLDLRLTFGPYSPNNGDASSTCSSSDSVFSHDPLPLEPSPFPFPEAQTT.

The N-terminal stretch at 1 to 16 (MWLLLALLSIFQETPA) is a signal peptide. Ig-like C2-type domains lie at 17–115 (FSLE…LIMD), 148–236 (PQRM…YLLD), and 245–345 (PILQ…AWLT). The Extracellular portion of the chain corresponds to 17–367 (FSLEASEEME…TATSEARYTD (351 aa)). An intrachain disulfide couples C54 to C98. N109 carries N-linked (GlcNAc...) asparagine glycosylation. A disulfide bridge connects residues C168 and C220. N-linked (GlcNAc...) asparagine glycans are attached at residues N254, N286, and N307. Residues C267 and C329 are joined by a disulfide bond. A helical membrane pass occupies residues 368-388 (IILYVSGSLALVLLLLLAGVY). The Cytoplasmic portion of the chain corresponds to 389–800 (HRQAIHGHHS…PFPFPEAQTT (412 aa)). One can recognise a Protein kinase domain in the interval 465–753 (LVLGKPLGEG…VLLAVSEEYL (289 aa)). Residues 471–479 (LGEGCFGQV) and K501 each bind ATP. Position 571 is a phosphoserine (S571). D610 (proton acceptor) is an active-site residue. Y640, Y641, and Y752 each carry phosphotyrosine; by autocatalysis. The disordered stretch occupies residues 768-800 (DASSTCSSSDSVFSHDPLPLEPSPFPFPEAQTT). A compositionally biased stretch (low complexity) spans 770–781 (SSTCSSSDSVFS).

This sequence belongs to the protein kinase superfamily. Tyr protein kinase family. Fibroblast growth factor receptor subfamily. Monomer. Homodimer after ligand binding. Interacts with FGF1, FGF2, FGF4, FGF6, FGF8, FGF9, FGF16, FGF17, FGF18, FGF19, FGF21 and FGF23 (in vitro). Binding affinity for FGF family members is enhanced by interactions between FGFs and heparan sulfate proteoglycans. Interacts with KLB; this strongly increases the affinity for FGF19 and FGF23. Affinity for FGF19 is strongly increased by KLB and sulfated glycosaminoglycans. KLB and KL both interact with the core-glycosylated FGFR4 in the endoplasmic reticulum and promote its degradation, so that only FGFR4 with fully mature N-glycans is expressed at the cell surface. Identified in a complex with NCAM1, CDH2, PLCG1, FRS2, SRC, SHC1, GAP43 and CTTN. Interacts with MMP14 and HIP1. Interacts with STAT3. Post-translationally, N-glycosylated. Full maturation of the glycan chains in the Golgi is essential for high affinity interaction with FGF19. In terms of processing, ubiquitinated. Subject to proteasomal degradation when not fully glycosylated. Autophosphorylated. Binding of FGF family members together with heparan sulfate proteoglycan or heparin promotes receptor dimerization and autophosphorylation on tyrosine residues. Autophosphorylation occurs in trans between the two FGFR molecules present in the dimer.

It is found in the cell membrane. The protein localises to the endosome. Its subcellular location is the endoplasmic reticulum. It catalyses the reaction L-tyrosyl-[protein] + ATP = O-phospho-L-tyrosyl-[protein] + ADP + H(+). With respect to regulation, present in an inactive conformation in the absence of bound ligand. Ligand binding leads to dimerization and activation by autophosphorylation on tyrosine residues. Its function is as follows. Tyrosine-protein kinase that acts as a cell-surface receptor for fibroblast growth factors and plays a role in the regulation of cell proliferation, differentiation and migration, and in regulation of lipid metabolism, bile acid biosynthesis, glucose uptake, vitamin D metabolism and phosphate homeostasis. Required for normal down-regulation of the expression of CYP7A1, the rate-limiting enzyme in bile acid synthesis, in response to FGF19. Phosphorylates PLCG1 and FRS2. Ligand binding leads to the activation of several signaling cascades. Activation of PLCG1 leads to the production of the cellular signaling molecules diacylglycerol and inositol 1,4,5-trisphosphate. Phosphorylation of FRS2 triggers recruitment of GRB2, GAB1, PIK3R1 and SOS1, and mediates activation of RAS, MAPK1/ERK2, MAPK3/ERK1 and the MAP kinase signaling pathway, as well as of the AKT1 signaling pathway. Promotes SRC-dependent phosphorylation of the matrix protease MMP14 and its lysosomal degradation. FGFR4 signaling is down-regulated by receptor internalization and degradation; MMP14 promotes internalization and degradation of FGFR4. The polypeptide is Fibroblast growth factor receptor 4 (Fgfr4) (Rattus norvegicus (Rat)).